A 397-amino-acid chain; its full sequence is MSEHNYQSDREVAEDPFLNYEASANQLSSNSRESTPRGSPWRAGMRSASLMTEPLEDSMYSDNNYLDNGVSFTKDENPLYSPSWPSLADANVNSMKSNNAIQEHKAAKFVSEKSLEKVSTADNNLVLQELENLRERLNQVELQLSERPSSYLGYHNNLSPYRSPNSYPSLLPSTHSPHSPAPLSTMQTALMRLRTYHPSPIILKPVEQAVNHAITLVNTSPSSVVDALCRSLAELCLGLVQEAIDASILSQQESSNSLDLVRHTPPLNYTSSVDSSPQRMASDSYGRPSLHLNDPFPSVDLQSNELSHHNVRTTLFSDDSRFHSKIHTHSTPPSQMYSAASHFRYRSDPSTRHVSNSTNKSSLHPSPTSLRVAHPIIPQRASPASQSFPSLQDTPSP.

Over residues 1 to 13 (MSEHNYQSDREVA) the composition is skewed to basic and acidic residues. 3 disordered regions span residues 1 to 44 (MSEH…WRAG), 269 to 298 (YTSSVDSSPQRMASDSYGRPSLHLNDPFPS), and 346 to 397 (RSDP…TPSP). Composition is skewed to polar residues over residues 22–37 (ASANQLSSNSRESTPR), 269–281 (YTSSVDSSPQRMA), 352–369 (RHVSNSTNKSSLHPSPTS), and 382–397 (SPASQSFPSLQDTPSP). Phosphoserine occurs at positions 366 and 396.

As to quaternary structure, interacts with mto1; the interaction is direct and required for efficient binding to the gamma-tubulin complex. Interacts with gamma tubulin complex subunits alp4, alp6 and gtb1.

The protein resides in the cytoplasm. It is found in the cytoskeleton. It localises to the microtubule organizing center. The protein localises to the spindle pole body. Acts together with mto1 to promote nucleation of at least a subset of cytoplasmic microtubules, by recruiting the gamma-tubulin complex to the interphase microtubule organizing center (iMTOC) and to the equatorial MTOC (eMTOC) during anaphase. Does not appear to be required for cytoplasmic astral microtubule nucleation from the spindle pole body (SPB). Required to establish the eMTOC, and thereby to tether the cytokinetic actin ring. In Schizosaccharomyces pombe (strain 972 / ATCC 24843) (Fission yeast), this protein is Gamma tubulin complex adapter mto2.